The following is a 215-amino-acid chain: Leucyl/phenylalanyl-tRNA--protein transferase (215 aa).

Belongs to the L/F-transferase family.

It is found in the cytoplasm. The enzyme catalyses N-terminal L-lysyl-[protein] + L-leucyl-tRNA(Leu) = N-terminal L-leucyl-L-lysyl-[protein] + tRNA(Leu) + H(+). It carries out the reaction N-terminal L-arginyl-[protein] + L-leucyl-tRNA(Leu) = N-terminal L-leucyl-L-arginyl-[protein] + tRNA(Leu) + H(+). It catalyses the reaction L-phenylalanyl-tRNA(Phe) + an N-terminal L-alpha-aminoacyl-[protein] = an N-terminal L-phenylalanyl-L-alpha-aminoacyl-[protein] + tRNA(Phe). Functionally, functions in the N-end rule pathway of protein degradation where it conjugates Leu, Phe and, less efficiently, Met from aminoacyl-tRNAs to the N-termini of proteins containing an N-terminal arginine or lysine. This is Leucyl/phenylalanyl-tRNA--protein transferase from Campylobacter jejuni (strain RM1221).